Reading from the N-terminus, the 525-residue chain is MVARPEPEVEAMDAELAVPPPGCSHLGSFKVDNWKQNLRAIYQCFVWSGTAEARKRKAKSCVCHVCGIHLNRLHSCLYCVFFGCFTKKHIHDHAKSKRHNLAIDLMYGGIYCFLCQDYIYDKDIEIIAKEEQRKAWKMQGVGEKFSTWEPTKRELELLKHNPKRRKITSNCTIGLRGLINLGNTCFMNCIVQALTHTPLLRDFFLSDRHRCEMQSPSSCLVCEMSSLFQEFYSGHRSPHIPYKLLHLVWTHARHLAGYEQQDAHEFLIAALDVLHRHCKGDDNGKKANNPNHCNCIIDQIFTGGLQSDVTCQVCHGVSTTIDPFWDISLDLPGSSTPFWPLSPGSEGSVVNGESHASGTTTLTDCLRRFTRPEHLGSSAKIKCSGCHSYQESTKQLTMKKLPIVACFHLKRFEHSAKLRRKITTYVSFPLELDMTPFMASSKESRMNGQYQQPLDSLNNDNKYSLFAVVNHQGTLESGHYTSFIRQHKDQWFKCDDAIITKASIKDVLDSEGYLLFYHKQFLEYE.

The UBP-type zinc finger occupies 21-138; it reads PGCSHLGSFK…KEEQRKAWKM (118 aa). Positions 23, 25, 63, 66, 76, 79, 84, 89, 93, 99, 112, and 115 each coordinate Zn(2+). Lys129 is subject to N6-acetyllysine. Residue Thr147 is modified to Phosphothreonine. Residues 176–520 form the USP domain; sequence RGLINLGNTC…EGYLLFYHKQ (345 aa). Cys185 (nucleophile) is an active-site residue. Phosphoserine is present on Ser237. His479 serves as the catalytic Proton acceptor.

It belongs to the peptidase C19 family. UBP8 subfamily. Component of some SAGA transcription coactivator-HAT complexes, at least composed of ATXN7, ATXN7L3, ENY2, GCN5L2, SUPT3H, TAF10, TRRAP and USP22. Within the SAGA complex, ATXN7L3, ENY2 and USP22 form a subcomplex required for histone deubiquitination. Interacts directly with ATXN7L3; leading to its recruitment to the SAGA complex. Interacts with ATXN7L3 and weakly with ATXN7L3B. Interacts with MED1. Phosphorylated in G2/M phase, but not in G1 phase by CDK1. Post-translationally, ubiquitinated and subsequently degraded in a CDC20-dependent manner. In terms of tissue distribution, highly expressed in brain and weakly in other organs.

The protein localises to the nucleus. The protein resides in the cytoplasm. The enzyme catalyses Thiol-dependent hydrolysis of ester, thioester, amide, peptide and isopeptide bonds formed by the C-terminal Gly of ubiquitin (a 76-residue protein attached to proteins as an intracellular targeting signal).. Deubiquitinase that plays a role in several cellular processes including transcriptional regulation, cell cycle progression or innate immunity. As part of the transcription regulatory histone acetylation (HAT) complex SAGA, catalyzes the deubiquitination of both histones H2A and H2B, thereby acting as a transcriptional coactivator. Recruited to specific gene promoters by activators such as MYC, where it is required for transcription. Facilitates cell-cycle progression by stabilizing CCNB1 and antagonizing its proteasome-mediated degradation in a cell cycle-specific manner. Modulates cell cycle progression and apoptosis also by antagonizing TP53 transcriptional activation through deacetylase SIRT1 stabilization. Plays multiple roles in immunity and inflammation. Participates in antiviral response by deubiquitinating the importin KPNA2, leading to IRF3 nuclear translocation and subsequent type I interferon production. Acts as a central regulator of type III IFN signaling by negatively regulating STING1 activation and ubiquitination. Inhibits NLRP3 inflammasome activation by promoting NLRP3 degradation through ATG5-dependent autophagy. Deubiquitinates CD274 to induce its stabilization and thereby participates in maintenance of immune tolerance to self. Controls necroptotic cell death by regulating RIPK3 phosphorylation and ubiquitination. During bacterial infection, promotes pro-inflammatory response by targeting TRAF6 and removing its 'Lys-48'-linked polyubiquitination. This is Ubiquitin carboxyl-terminal hydrolase 22 (Usp22) from Mus musculus (Mouse).